A 221-amino-acid polypeptide reads, in one-letter code: Thiamine-phosphate synthase (221 aa).

Residues 49-53 (QFREK) and Asn85 each bind 4-amino-2-methyl-5-(diphosphooxymethyl)pyrimidine. Mg(2+)-binding residues include Asp86 and Asp105. Ser124 lines the 4-amino-2-methyl-5-(diphosphooxymethyl)pyrimidine pocket. Position 151 to 153 (151 to 153 (TQS)) interacts with 2-[(2R,5Z)-2-carboxy-4-methylthiazol-5(2H)-ylidene]ethyl phosphate. Lys154 contacts 4-amino-2-methyl-5-(diphosphooxymethyl)pyrimidine. Residues Gly183 and 203–204 (IS) each bind 2-[(2R,5Z)-2-carboxy-4-methylthiazol-5(2H)-ylidene]ethyl phosphate.

It belongs to the thiamine-phosphate synthase family. Requires Mg(2+) as cofactor.

The enzyme catalyses 2-[(2R,5Z)-2-carboxy-4-methylthiazol-5(2H)-ylidene]ethyl phosphate + 4-amino-2-methyl-5-(diphosphooxymethyl)pyrimidine + 2 H(+) = thiamine phosphate + CO2 + diphosphate. The catalysed reaction is 2-(2-carboxy-4-methylthiazol-5-yl)ethyl phosphate + 4-amino-2-methyl-5-(diphosphooxymethyl)pyrimidine + 2 H(+) = thiamine phosphate + CO2 + diphosphate. It catalyses the reaction 4-methyl-5-(2-phosphooxyethyl)-thiazole + 4-amino-2-methyl-5-(diphosphooxymethyl)pyrimidine + H(+) = thiamine phosphate + diphosphate. Its pathway is cofactor biosynthesis; thiamine diphosphate biosynthesis; thiamine phosphate from 4-amino-2-methyl-5-diphosphomethylpyrimidine and 4-methyl-5-(2-phosphoethyl)-thiazole: step 1/1. In terms of biological role, condenses 4-methyl-5-(beta-hydroxyethyl)thiazole monophosphate (THZ-P) and 2-methyl-4-amino-5-hydroxymethyl pyrimidine pyrophosphate (HMP-PP) to form thiamine monophosphate (TMP). The sequence is that of Thiamine-phosphate synthase from Histophilus somni (strain 129Pt) (Haemophilus somnus).